The sequence spans 370 residues: Chorismate synthase (370 aa).

Residues 41–60 form a disordered region; the sequence is IQGDLDRRKPGTSRHVTQRK. The NADP(+) site is built by arginine 48 and arginine 54. FMN is bound by residues 125-127, 238-239, glycine 278, 293-297, and arginine 319; these read RSS, NA, and KPTSS.

This sequence belongs to the chorismate synthase family. In terms of assembly, homotetramer. It depends on FMNH2 as a cofactor.

The catalysed reaction is 5-O-(1-carboxyvinyl)-3-phosphoshikimate = chorismate + phosphate. It participates in metabolic intermediate biosynthesis; chorismate biosynthesis; chorismate from D-erythrose 4-phosphate and phosphoenolpyruvate: step 7/7. Catalyzes the anti-1,4-elimination of the C-3 phosphate and the C-6 proR hydrogen from 5-enolpyruvylshikimate-3-phosphate (EPSP) to yield chorismate, which is the branch point compound that serves as the starting substrate for the three terminal pathways of aromatic amino acid biosynthesis. This reaction introduces a second double bond into the aromatic ring system. The protein is Chorismate synthase of Cupriavidus pinatubonensis (strain JMP 134 / LMG 1197) (Cupriavidus necator (strain JMP 134)).